A 208-amino-acid polypeptide reads, in one-letter code: Protein-methionine-sulfoxide reductase heme-binding subunit MsrQ (208 aa).

Transmembrane regions (helical) follow at residues 16–36 (IAVFVACLLPLVWYGARFVGG), 53–73 (WGLIFLLASLAATPARLLWGW), 82–102 (MVGLFAFFYVCLHLLSYIGLD), 118–138 (TYITVGMAALLLLVPLAVTST), 156–176 (LVYPAAVLGVLHYMLMVKADL), and 178–198 (EPLIFAGILGLLLAVRLVPAV).

Belongs to the MsrQ family. In terms of assembly, heterodimer of a catalytic subunit (MsrP) and a heme-binding subunit (MsrQ). The cofactor is FMN. Heme b is required as a cofactor.

The protein localises to the cell inner membrane. Part of the MsrPQ system that repairs oxidized periplasmic proteins containing methionine sulfoxide residues (Met-O), using respiratory chain electrons. Thus protects these proteins from oxidative-stress damage caused by reactive species of oxygen and chlorine generated by the host defense mechanisms. MsrPQ is essential for the maintenance of envelope integrity under bleach stress, rescuing a wide series of structurally unrelated periplasmic proteins from methionine oxidation. MsrQ provides electrons for reduction to the reductase catalytic subunit MsrP, using the quinone pool of the respiratory chain. This chain is Protein-methionine-sulfoxide reductase heme-binding subunit MsrQ, found in Rhodospirillum rubrum (strain ATCC 11170 / ATH 1.1.1 / DSM 467 / LMG 4362 / NCIMB 8255 / S1).